A 167-amino-acid chain; its full sequence is NADH-quinone oxidoreductase subunit I 1 (167 aa).

4Fe-4S ferredoxin-type domains lie at 58–88 (LRRY…IDAE) and 98–127 (TRYD…EGPN). [4Fe-4S] cluster is bound by residues Cys68, Cys71, Cys74, Cys78, Cys107, Cys110, Cys113, and Cys117.

It belongs to the complex I 23 kDa subunit family. As to quaternary structure, NDH-1 is composed of 14 different subunits. Subunits NuoA, H, J, K, L, M, N constitute the membrane sector of the complex. Requires [4Fe-4S] cluster as cofactor.

It localises to the cell inner membrane. The catalysed reaction is a quinone + NADH + 5 H(+)(in) = a quinol + NAD(+) + 4 H(+)(out). Functionally, NDH-1 shuttles electrons from NADH, via FMN and iron-sulfur (Fe-S) centers, to quinones in the respiratory chain. The immediate electron acceptor for the enzyme in this species is believed to be ubiquinone. Couples the redox reaction to proton translocation (for every two electrons transferred, four hydrogen ions are translocated across the cytoplasmic membrane), and thus conserves the redox energy in a proton gradient. In Cereibacter sphaeroides (strain ATCC 17029 / ATH 2.4.9) (Rhodobacter sphaeroides), this protein is NADH-quinone oxidoreductase subunit I 1.